We begin with the raw amino-acid sequence, 331 residues long: Large ribosomal subunit protein uL3 (331 aa).

Belongs to the universal ribosomal protein uL3 family. In terms of assembly, part of the 50S ribosomal subunit. Forms a cluster with proteins L14 and L24e.

Its function is as follows. One of the primary rRNA binding proteins, it binds directly near the 3'-end of the 23S rRNA, where it nucleates assembly of the 50S subunit. This chain is Large ribosomal subunit protein uL3, found in Thermoplasma volcanium (strain ATCC 51530 / DSM 4299 / JCM 9571 / NBRC 15438 / GSS1).